The sequence spans 397 residues: Carbamoyl phosphate synthase small chain (397 aa).

The segment at 1-204 (MSPLLPSFPF…PAYRTLDTSK (204 aa)) is CPSase. Serine 53, glycine 256, and glycine 258 together coordinate L-glutamine. A Glutamine amidotransferase type-1 domain is found at 208–395 (KVVAYDFGVK…MELMNAAKKE (188 aa)). Residue cysteine 284 is the Nucleophile of the active site. L-glutamine contacts are provided by leucine 285, glutamine 288, asparagine 326, glycine 328, and phenylalanine 329. Active-site residues include histidine 368 and glutamate 370.

Belongs to the CarA family. In terms of assembly, composed of two chains; the small (or glutamine) chain promotes the hydrolysis of glutamine to ammonia, which is used by the large (or ammonia) chain to synthesize carbamoyl phosphate. Tetramer of heterodimers (alpha,beta)4.

It catalyses the reaction hydrogencarbonate + L-glutamine + 2 ATP + H2O = carbamoyl phosphate + L-glutamate + 2 ADP + phosphate + 2 H(+). The enzyme catalyses L-glutamine + H2O = L-glutamate + NH4(+). The protein operates within amino-acid biosynthesis; L-arginine biosynthesis; carbamoyl phosphate from bicarbonate: step 1/1. It functions in the pathway pyrimidine metabolism; UMP biosynthesis via de novo pathway; (S)-dihydroorotate from bicarbonate: step 1/3. Functionally, small subunit of the glutamine-dependent carbamoyl phosphate synthetase (CPSase). CPSase catalyzes the formation of carbamoyl phosphate from the ammonia moiety of glutamine, carbonate, and phosphate donated by ATP, constituting the first step of 2 biosynthetic pathways, one leading to arginine and/or urea and the other to pyrimidine nucleotides. The small subunit (glutamine amidotransferase) binds and cleaves glutamine to supply the large subunit with the substrate ammonia. This is Carbamoyl phosphate synthase small chain from Polynucleobacter asymbioticus (strain DSM 18221 / CIP 109841 / QLW-P1DMWA-1) (Polynucleobacter necessarius subsp. asymbioticus).